The sequence spans 352 residues: MDYQVSSPTYDIDYYTSEPCQKINVKQIAARLLPPLYSLVFIFGFVGNILVVLILINCKRLKSMTDIYLLNLAISDLLFLLTIPFWAHYAAAQWDFGNTMCQLLTGLYLIGFFSGIFFIILLTIDRYLAIVHAVFALKARTVTFGLVTSVITWVVAVFASLPGIIFTRSQREGLHYTCSSHFPSSQYQFWKNFQTLKIVILGLVLPLLVMVICYSGILKTLLRCRNEKKRHRAVRLIFTIMIVYFLFWAPYNIVLLLNTFQEFFGLNNCSSSNRLDQAMQVTETLGMTHCCINPIIYAFVGEKFRNYLLVFFQKHLAKRFCKCCSIFQQEAPERASSVYTRSTGEQETTVGL.

Residues 1 to 30 (MDYQVSSPTYDIDYYTSEPCQKINVKQIAA) are Extracellular-facing. Tyrosine 3 bears the Sulfotyrosine mark. Serine 6 and serine 7 each carry an O-linked (GalNAc...) serine glycan. Sulfotyrosine is present on residues tyrosine 10, tyrosine 14, and tyrosine 15. 2 disulfides stabilise this stretch: cysteine 20–cysteine 269 and cysteine 101–cysteine 178. Residues 31–58 (RLLPPLYSLVFIFGFVGNILVVLILINC) traverse the membrane as a helical segment. At 59 to 68 (KRLKSMTDIY) the chain is on the cytoplasmic side. A helical membrane pass occupies residues 69–89 (LLNLAISDLLFLLTIPFWAHY). At 90–102 (AAAQWDFGNTMCQ) the chain is on the extracellular side. The helical transmembrane segment at 103-124 (LLTGLYLIGFFSGIFFIILLTI) threads the bilayer. Topologically, residues 125-141 (DRYLAIVHAVFALKART) are cytoplasmic. A helical transmembrane segment spans residues 142–166 (VTFGLVTSVITWVVAVFASLPGIIF). Residues 167-198 (TRSQREGLHYTCSSHFPSSQYQFWKNFQTLKI) are Extracellular-facing. Residues 199-218 (VILGLVLPLLVMVICYSGIL) traverse the membrane as a helical segment. At 219–235 (KTLLRCRNEKKRHRAVR) the chain is on the cytoplasmic side. The chain crosses the membrane as a helical span at residues 236 to 260 (LIFTIMIVYFLFWAPYNIVLLLNTF). Over 261–277 (QEFFGLNNCSSSNRLDQ) the chain is Extracellular. Residues 278–301 (AMQVTETLGMTHCCINPIIYAFVG) form a helical membrane-spanning segment. At 302–352 (EKFRNYLLVFFQKHLAKRFCKCCSIFQQEAPERASSVYTRSTGEQETTVGL) the chain is on the cytoplasmic side. S-palmitoyl cysteine attachment occurs at residues cysteine 321, cysteine 323, and cysteine 324. 3 positions are modified to phosphoserine; by BARK1: serine 336, serine 337, and serine 342.

The protein belongs to the G-protein coupled receptor 1 family. Interacts with PRAF2. Efficient ligand binding to CCL3/MIP-1alpha and CCL4/MIP-1beta requires sulfation, O-glycosylation and sialic acid modifications. Glycosylation on Ser-6 is required for efficient binding of CCL4. Interacts with GRK2. Interacts with ARRB1 and ARRB2. Interacts with CNIH4. Interacts with S100A4; this interaction stimulates T-lymphocyte chemotaxis. Sulfated on at least 2 of the N-terminal tyrosines. Sulfation is required for efficient binding of the chemokines, CCL3 and CCL4. In terms of processing, palmitoylation in the C-terminal is important for cell surface expression. Post-translationally, phosphorylation on serine residues in the C-terminal is stimulated by binding CC chemokines especially by APO-RANTES. O-glycosylated, but not N-glycosylated. Ser-6 appears to be the major site even if Ser-7 may be also O-glycosylated. Also sialylated glycans present which contribute to chemokine binding. Thr-16 and Ser-17 may also be glycosylated and, if so, with small moieties such as a T-antigen.

It localises to the cell membrane. Functionally, receptor for a number of inflammatory CC-chemokines including CCL3/MIP-1-alpha, CCL4/MIP-1-beta and RANTES and subsequently transduces a signal by increasing the intracellular calcium ion level. May play a role in the control of granulocytic lineage proliferation or differentiation. Participates in T-lymphocyte migration to the infection site by acting as a chemotactic receptor. This chain is C-C chemokine receptor type 5 (CCR5), found in Allochrocebus lhoesti (L'Hoest's monkey).